The primary structure comprises 101 residues: Small ribosomal subunit protein uS14 (101 aa).

It belongs to the universal ribosomal protein uS14 family. As to quaternary structure, part of the 30S ribosomal subunit. Contacts proteins S3 and S10.

Functionally, binds 16S rRNA, required for the assembly of 30S particles and may also be responsible for determining the conformation of the 16S rRNA at the A site. The chain is Small ribosomal subunit protein uS14 from Stenotrophomonas maltophilia (strain K279a).